Consider the following 117-residue polypeptide: Large ribosomal subunit protein bL20c (117 aa).

Belongs to the bacterial ribosomal protein bL20 family.

It is found in the plastid. The protein resides in the chloroplast. Binds directly to 23S ribosomal RNA and is necessary for the in vitro assembly process of the 50S ribosomal subunit. It is not involved in the protein synthesizing functions of that subunit. The protein is Large ribosomal subunit protein bL20c of Platanus occidentalis (Sycamore).